The following is a 774-amino-acid chain: Two pore channel protein 2 (774 aa).

At 1 to 92 the chain is on the cytoplasmic side; sequence MEEEPLLAGS…GSLRLYRWYY (92 aa). The helical transmembrane segment at 93–113 threads the bilayer; the sequence is SNLCQWGLGLTIAVVLALAFI. The Extracellular portion of the chain corresponds to 114 to 140; that stretch reads ERPSSLTYTSDIRVKPKPWEPPCGMTE. A helical transmembrane segment spans residues 141–161; sequence GIEIVCLCIFILDVTAKGYLI. At 162–170 the chain is on the cytoplasmic side; that stretch reads GWEEFRMNK. A helical transmembrane segment spans residues 171–191; that stretch reads WLLAYLIVITASVIDWMLSIS. The Extracellular segment spans residues 192–197; sequence MLCDEN. A helical transmembrane segment spans residues 198-218; the sequence is LRVRRLIRPFFLLQNSSLMKK. Positions 217–221 are interaction with phosphatidylinositol 3,5-bisphosphate; the sequence is KKTLK. Residues 219-232 lie on the Cytoplasmic side of the membrane; sequence TLKCIKRTLPEIAS. A helical membrane pass occupies residues 233 to 253; that stretch reads VILLLALHICLFTMIGMLIFA. The Extracellular segment spans residues 254 to 267; the sequence is KSDDPKQNGEWQTY. The helical; Pore-forming intramembrane region spans 268–292; that stretch reads FRNLPKALSSLLVLLTTANNPDVMI. The Extracellular portion of the chain corresponds to 293–302; sequence PAYSLNRGYS. Residues 303–323 form a helical membrane-spanning segment; it reads IFFILFSVFGTYLLMNLMTAI. Topologically, residues 324 to 452 are cytoplasmic; sequence IYNQFRGYLL…YVYSHYYISV (129 aa). A helical membrane pass occupies residues 453–475; the sequence is LGNAVALANVICICTVLVLNAEK. The Extracellular portion of the chain corresponds to 476–486; that stretch reads SASEKNYFYME. Residues 487–507 traverse the membrane as a helical segment; sequence IINCIFILYYLIEMLLKIVAF. The Cytoplasmic segment spans residues 508 to 518; the sequence is GWKGYLSYRNN. Residues 519 to 539 form a helical membrane-spanning segment; the sequence is IFDGFLTVLLLAIQIVIFITF. The Extracellular portion of the chain corresponds to 540–564; that stretch reads KIPYVDVDPVPRHVMALWEMIRLVN. A helical transmembrane segment spans residues 565 to 585; the sequence is MLIVFRFLRIIPEIKLMAVVA. The Cytoplasmic segment spans residues 586 to 596; sequence STIVDLVKNLR. A helical membrane pass occupies residues 597-617; that stretch reads AFAGILLVVYYMFAVLGIWLF. The Extracellular portion of the chain corresponds to 618–658; sequence QGAISPPSNMSLVSNSSLENITGPYSMECGTFEQLEYWPNN. Asparagine 626, asparagine 632, and asparagine 637 each carry an N-linked (GlcNAc...) asparagine glycan. The helical; Pore-forming intramembrane region spans 659–681; sequence FDDFASSLILLYNIMVVNNWHVF. The Extracellular portion of the chain corresponds to 682–696; the sequence is TDAYARYTTDWSLVY. Residues 697 to 717 form a helical membrane-spanning segment; the sequence is FVVWWLTSSVMWVNLFVALIL. At 718-774 the chain is on the cytoplasmic side; the sequence is ENFTYKWDRSNGLSVEDVERIAYQSTVQLMFKEHVKEPTEEELLAQLHQHPHLHLSW.

It belongs to the calcium channel alpha-1 subunit (TC 1.A.1.11) family. Two pore calcium channel subfamily. In terms of assembly, homodimer. Post-translationally, N-glycosylated.

It localises to the late endosome membrane. It is found in the lysosome membrane. It carries out the reaction Na(+)(in) = Na(+)(out). The catalysed reaction is Ca(2+)(in) = Ca(2+)(out). Intracellular channel initially characterized as a non-selective Ca(2+)-permeable channel activated by NAADP (nicotinic acid adenine dinucleotide phosphate), it is also a highly-selective Na(+) channel activated directly by PI(3,5)P2 (phosphatidylinositol 3,5-bisphosphate). Localizes to the lysosomal and late endosome membranes where it regulates organellar membrane excitability, membrane trafficking, and pH homeostasis. The polypeptide is Two pore channel protein 2 (tpcn2) (Danio rerio (Zebrafish)).